Here is a 155-residue protein sequence, read N- to C-terminus: Secreted RxLR effector protein RXLR-C301 (155 aa).

Residues 1 to 24 form the signal peptide; the sequence is MRLYALSVSLLAAITLLACVIASA. The RxLR-dEER signature appears at 34-64; the sequence is RRLSQDVSETEITELSESKKPTAQDIDNEER.

The protein belongs to the RxLR effector family.

The protein resides in the secreted. Its subcellular location is the host cell membrane. Secreted effector that does not suppress pattern-triggered immunity (PTI) in plant host. The protein is Secreted RxLR effector protein RXLR-C301 of Plasmopara halstedii (Downy mildew of sunflower).